Reading from the N-terminus, the 191-residue chain is Protein Ves (191 aa).

Belongs to the Ves family.

This Shigella flexneri protein is Protein Ves.